We begin with the raw amino-acid sequence, 350 residues long: MSAASPLRWQLIEHAPLRALNTFHVDATARWLLNIHAPEALPDALAAPQIAGQPLLVLGSGSNVLLAGDPPGCVLCFDNRDITIIAHHADHAIVRAGAGVNWHGLVMYSLQQGLSGLENLALIPGTVGACPIQNIGAYGAQVSDFIHVVEAYDRGTEQFVRLNPAECAFGYRDSVFKQQPDRYLIVAVEFNLPLLHELRLDYAGIRDELARMGAELAGAADVAQAVINIRQRKLPDPEVLGNAGSFFKNPLLPSEQIAALQASFADMPVFPGEQPGQGKLSAAWLIEQCGWKGKREGDAGISEAHALVLVNHGSASGAQLLAFARQVAESVRERYSVILEPEPRVIGAHW.

The FAD-binding PCMH-type domain maps to 24-195; that stretch reads HVDATARWLL…VAVEFNLPLL (172 aa). Residue arginine 172 is part of the active site. Serine 245 acts as the Proton donor in catalysis. The active site involves glutamate 342.

Belongs to the MurB family. FAD serves as cofactor.

The protein localises to the cytoplasm. It catalyses the reaction UDP-N-acetyl-alpha-D-muramate + NADP(+) = UDP-N-acetyl-3-O-(1-carboxyvinyl)-alpha-D-glucosamine + NADPH + H(+). Its pathway is cell wall biogenesis; peptidoglycan biosynthesis. In terms of biological role, cell wall formation. In Xanthomonas campestris pv. campestris (strain 8004), this protein is UDP-N-acetylenolpyruvoylglucosamine reductase.